A 660-amino-acid polypeptide reads, in one-letter code: Bifunctional polymyxin resistance protein ArnA (660 aa).

Residues M1–L304 form a formyltransferase ArnAFT region. H86–I88 contributes to the (6R)-10-formyltetrahydrofolate binding site. H104 serves as the catalytic Proton donor; for formyltransferase activity. (6R)-10-formyltetrahydrofolate-binding positions include R114 and V136 to D140. The interval R314 to S660 is dehydrogenase ArnADH. NAD(+) is bound by residues D347 and D368 to I369. UDP-alpha-D-glucuronate is bound by residues A393, Y398, and T432 to S433. The active-site Proton acceptor; for decarboxylase activity is E434. Residues R460, N492, K526 to R535, and Y613 contribute to the UDP-alpha-D-glucuronate site. R619 (proton donor; for decarboxylase activity) is an active-site residue.

The protein in the N-terminal section; belongs to the Fmt family. UDP-L-Ara4N formyltransferase subfamily. In the C-terminal section; belongs to the NAD(P)-dependent epimerase/dehydratase family. UDP-glucuronic acid decarboxylase subfamily. In terms of assembly, homohexamer, formed by a dimer of trimers.

The catalysed reaction is UDP-alpha-D-glucuronate + NAD(+) = UDP-beta-L-threo-pentopyranos-4-ulose + CO2 + NADH. It carries out the reaction UDP-4-amino-4-deoxy-beta-L-arabinose + (6R)-10-formyltetrahydrofolate = UDP-4-deoxy-4-formamido-beta-L-arabinose + (6S)-5,6,7,8-tetrahydrofolate + H(+). It functions in the pathway nucleotide-sugar biosynthesis; UDP-4-deoxy-4-formamido-beta-L-arabinose biosynthesis; UDP-4-deoxy-4-formamido-beta-L-arabinose from UDP-alpha-D-glucuronate: step 1/3. Its pathway is nucleotide-sugar biosynthesis; UDP-4-deoxy-4-formamido-beta-L-arabinose biosynthesis; UDP-4-deoxy-4-formamido-beta-L-arabinose from UDP-alpha-D-glucuronate: step 3/3. It participates in bacterial outer membrane biogenesis; lipopolysaccharide biosynthesis. Functionally, bifunctional enzyme that catalyzes the oxidative decarboxylation of UDP-glucuronic acid (UDP-GlcUA) to UDP-4-keto-arabinose (UDP-Ara4O) and the addition of a formyl group to UDP-4-amino-4-deoxy-L-arabinose (UDP-L-Ara4N) to form UDP-L-4-formamido-arabinose (UDP-L-Ara4FN). The modified arabinose is attached to lipid A and is required for resistance to polymyxin and cationic antimicrobial peptides. The sequence is that of Bifunctional polymyxin resistance protein ArnA from Escherichia coli O17:K52:H18 (strain UMN026 / ExPEC).